Reading from the N-terminus, the 273-residue chain is Shikimate dehydrogenase (NADP(+)) (273 aa).

Shikimate-binding positions include 15 to 17 and Thr-62; that span reads SKS. The active-site Proton acceptor is the Lys-66. Position 78 (Glu-78) interacts with NADP(+). Shikimate-binding residues include Asn-87 and Asp-103. Residues 127–131, 151–156, and Met-214 each bind NADP(+); these read GAGGA and NRTHDK. Residue Tyr-216 participates in shikimate binding. Gly-238 contacts NADP(+).

The protein belongs to the shikimate dehydrogenase family. In terms of assembly, homodimer.

The catalysed reaction is shikimate + NADP(+) = 3-dehydroshikimate + NADPH + H(+). The protein operates within metabolic intermediate biosynthesis; chorismate biosynthesis; chorismate from D-erythrose 4-phosphate and phosphoenolpyruvate: step 4/7. Functionally, involved in the biosynthesis of the chorismate, which leads to the biosynthesis of aromatic amino acids. Catalyzes the reversible NADPH linked reduction of 3-dehydroshikimate (DHSA) to yield shikimate (SA). The sequence is that of Shikimate dehydrogenase (NADP(+)) from Shewanella denitrificans (strain OS217 / ATCC BAA-1090 / DSM 15013).